The chain runs to 162 residues: Transcription antitermination protein RfaH (162 aa).

It belongs to the RfaH family. In terms of assembly, interacts with both the nontemplate DNA and the RNA polymerase (RNAP).

Its function is as follows. Enhances distal genes transcription elongation in a specialized subset of operons that encode extracytoplasmic components. RfaH is recruited into a multi-component RNA polymerase complex by the ops element, which is a short conserved DNA sequence located downstream of the main promoter of these operons. Once bound, RfaH suppresses pausing and inhibits Rho-dependent and intrinsic termination at a subset of sites. Termination signals are bypassed, which allows complete synthesis of long RNA chains. Also negatively controls expression and surface presentation of AG43 and possibly another AG43-independent factor that mediates cell-cell interactions and biofilm formation,. This is Transcription antitermination protein RfaH from Escherichia coli O6:K15:H31 (strain 536 / UPEC).